A 107-amino-acid polypeptide reads, in one-letter code: Nucleoid-associated protein Mmar10_0436 (107 aa).

This sequence belongs to the YbaB/EbfC family. Homodimer.

It is found in the cytoplasm. It localises to the nucleoid. In terms of biological role, binds to DNA and alters its conformation. May be involved in regulation of gene expression, nucleoid organization and DNA protection. The chain is Nucleoid-associated protein Mmar10_0436 from Maricaulis maris (strain MCS10) (Caulobacter maris).